A 495-amino-acid polypeptide reads, in one-letter code: uncharacterized protein (495 aa).

Transmembrane regions (helical) follow at residues Ile-43–Ile-63, Thr-75–Phe-95, Pro-106–Val-126, Leu-128–Ile-148, Ile-168–Ala-188, Trp-196–Leu-216, Pro-284–Phe-304, Gly-323–Leu-343, Pro-366–Val-386, Val-390–Phe-410, Ala-426–Phe-446, and Ser-461–Gly-481.

The protein belongs to the major facilitator superfamily. CAR1 family.

The protein resides in the membrane. This is an uncharacterized protein from Schizosaccharomyces pombe (strain 972 / ATCC 24843) (Fission yeast).